Here is a 520-residue protein sequence, read N- to C-terminus: Maturase K (520 aa).

Belongs to the intron maturase 2 family. MatK subfamily.

The protein resides in the plastid. It localises to the chloroplast. Its function is as follows. Usually encoded in the trnK tRNA gene intron. Probably assists in splicing its own and other chloroplast group II introns. This chain is Maturase K, found in Linum perenne (Perennial flax).